Consider the following 556-residue polypeptide: Formate--tetrahydrofolate ligase (556 aa).

Position 65-72 (65-72) interacts with ATP; it reads TPAGEGKS.

The protein belongs to the formate--tetrahydrofolate ligase family.

The catalysed reaction is (6S)-5,6,7,8-tetrahydrofolate + formate + ATP = (6R)-10-formyltetrahydrofolate + ADP + phosphate. Its pathway is one-carbon metabolism; tetrahydrofolate interconversion. This is Formate--tetrahydrofolate ligase from Clostridium botulinum (strain Alaska E43 / Type E3).